The primary structure comprises 600 residues: MASSLGDNFNLLSPQQRELVKMLLDNGQDHLFRDWPNPGVDDDEKKAFFDQLVLLDSSYPGGLVAYINNAKRLLADSKAGNNPFDGFTPSVPTGETLKFGDENFNKYEEAGVREARRAAFVLVAGGLGERLGYNGIKVALPAETTTGTCFLQHYIESILALQEASSEGEGQTHIPFVIMTSDDTHGRTLDLLESNSYFGMQPTQVTLLKQEKVACLEDNDARLALDPQNRYRVQTKPHGHGDVHSLLHSSGILKVWYNAGLKWVLFFQDTNGLLFKAIPSALGVSSTKQYHVNSLAVPRKAKEAIGGITRLTHSDGRSMVINVEYNQLDPLLRASGYPDGDVNSETGYSPFPGNINQLILELGPYIEELAKTGGAIQEFVNPKYKDASKTSFKSSTRLECMMQDYPKTLPPSSRVGFTVMETWFAYAPVKNNAEDAAKVPKGNPYHSATSGEMAIYRANSLILKKAGFQVADPVLQVINGQEVEVWPRITWKPKWGLTFSLVKSKVSGNCSISQRSTLAIKGRKIFIENLSVDGALIVDAVDDAEVNVSGSVQNNGWALEPVDYKDSSEPEVLRIRGFKFNKVEQVEKKYSEPGKFDFKA.

Belongs to the USP family. Requires Mg(2+) as cofactor. Mn(2+) serves as cofactor. The N-terminus is blocked.

The enzyme catalyses a monosaccharide 1-phosphate + UTP + H(+) = a UDP-monosaccharide + diphosphate. With respect to regulation, inhibited by a high concentration of pyrophosphate. Its function is as follows. May function as the terminal enzyme of the myo-inositol oxidation (MIO) pathway. May also play a role in the salvage pathway for synthesis of nucleotide sugars. The chain is UDP-sugar pyrophospharylase (USP) from Pisum sativum (Garden pea).